We begin with the raw amino-acid sequence, 106 residues long: uncharacterized protein (106 aa).

This is an uncharacterized protein from Rhodococcus erythropolis (Arthrobacter picolinophilus).